A 535-amino-acid chain; its full sequence is Calcium-dependent protein kinase 7 (535 aa).

The tract at residues 1–29 (MGNCCGNPSSATNQSKQGKPKNKNNPFYS) is disordered. G2 carries N-myristoyl glycine lipidation. The Protein kinase domain maps to 59 to 317 (YDLGREVGRG…AAQVLEHTWI (259 aa)). ATP is bound by residues 65–73 (VGRGEFGIT) and K88. The active-site Proton acceptor is the D183. At S223 the chain carries Phosphoserine. The interval 323-353 (APNVSLGETVKARLKQFSVMNKLKKRALRVI) is autoinhibitory domain. EF-hand domains lie at 360–395 (EEAAGIKEAFEMMDVNKRGKINLEELKYGLQKAGQQ), 396–431 (IADTDLQILMEATDVDGDGTLNYSEFVAVSVHLKKM), 432–467 (ANDEHLHKAFNFFDQNQSGYIEIDELREALNDELDN), and 468–504 (TSSEEVIAAIMQDVDTDKDGRISYEEFVAMMKAGTDW). Residues D373, N375, K379, E384, D409, D411, D413, T415, E420, D445, N447, S449, Y451, E456, D482, D484, D486, and R488 each coordinate Ca(2+). The residue at position 490 (S490) is a Phosphoserine. Residue E493 participates in Ca(2+) binding.

It belongs to the protein kinase superfamily. Ser/Thr protein kinase family. CDPK subfamily.

It localises to the cell membrane. The enzyme catalyses L-seryl-[protein] + ATP = O-phospho-L-seryl-[protein] + ADP + H(+). It carries out the reaction L-threonyl-[protein] + ATP = O-phospho-L-threonyl-[protein] + ADP + H(+). With respect to regulation, activated by calcium. Autophosphorylation may play an important role in the regulation of the kinase activity. In terms of biological role, may play a role in signal transduction pathways that involve calcium as a second messenger. This Arabidopsis thaliana (Mouse-ear cress) protein is Calcium-dependent protein kinase 7 (CPK7).